Here is a 207-residue protein sequence, read N- to C-terminus: MSHHHEGCCKHEGQPRHEGCCKGEKSEHEHCGHGHQHEHGQCCGGRHGRGGGRRQRFFGHGELRLVILDILSRDDSHGYELIKAIENLTQGNYTPSPGVIYPTLDFLQEQSLITIREEEGGKKQIALTEQGAQWLEENREQVEMIEERIKARCVGAALRQNPQMKRALDNFKAVLDLRVNQSDISDAQIKKIIAVIDRAAFDITQLD.

Basic and acidic residues predominate over residues Met1 to Gly40. The disordered stretch occupies residues Met1–Arg46.

In terms of assembly, oligomer (probable predominant form) and monomer.

Divalent metals such as nickel and iron have a similar negative effect on YqjI DNA-binding activity. Represses the expression of YqjH which is involved in iron homeostasis under excess nickel conditions. Also represses its own expression. This chain is Transcriptional regulator YqjI (yqjI), found in Escherichia coli (strain K12).